Consider the following 170-residue polypeptide: IMPACT family member YDL177C (170 aa).

The disordered stretch occupies residues 79 to 98 (KKKGNKANKSNNSHVNKSRN).

This sequence belongs to the IMPACT family.

The protein is IMPACT family member YDL177C of Saccharomyces cerevisiae (strain ATCC 204508 / S288c) (Baker's yeast).